Consider the following 174-residue polypeptide: Large ribosomal subunit protein uL18 (174 aa).

Belongs to the universal ribosomal protein uL18 family. Part of the 50S ribosomal subunit. Contacts the 5S and 23S rRNAs.

Its function is as follows. This is one of the proteins that bind and probably mediate the attachment of the 5S RNA into the large ribosomal subunit, where it forms part of the central protuberance. The polypeptide is Large ribosomal subunit protein uL18 (Methanocorpusculum labreanum (strain ATCC 43576 / DSM 4855 / Z)).